The chain runs to 221 residues: UPF0758 protein YicR (221 aa).

Residues 99 to 221 form the MPN domain; sequence ALLSPEMTLE…YVSFAERGWI (123 aa). 3 residues coordinate Zn(2+): His-170, His-172, and Asp-183. Residues 170-183 carry the JAMM motif motif; the sequence is HNHPSGCAEPSKAD.

Belongs to the UPF0758 family. YicR subfamily.

This is UPF0758 protein YicR from Salmonella arizonae (strain ATCC BAA-731 / CDC346-86 / RSK2980).